We begin with the raw amino-acid sequence, 339 residues long: Beta-ketoacyl-[acyl-carrier-protein] synthase III (339 aa).

Catalysis depends on residues C119 and H262. Residues 263–267 (QANQR) form an ACP-binding region. The active site involves N292.

Belongs to the thiolase-like superfamily. FabH family. As to quaternary structure, homodimer.

Its subcellular location is the cytoplasm. The enzyme catalyses malonyl-[ACP] + acetyl-CoA + H(+) = 3-oxobutanoyl-[ACP] + CO2 + CoA. Its pathway is lipid metabolism; fatty acid biosynthesis. Catalyzes the condensation reaction of fatty acid synthesis by the addition to an acyl acceptor of two carbons from malonyl-ACP. Catalyzes the first condensation reaction which initiates fatty acid synthesis and may therefore play a role in governing the total rate of fatty acid production. Possesses both acetoacetyl-ACP synthase and acetyl transacylase activities. Its substrate specificity determines the biosynthesis of branched-chain and/or straight-chain of fatty acids. This chain is Beta-ketoacyl-[acyl-carrier-protein] synthase III, found in Prochlorococcus marinus (strain MIT 9313).